Here is a 691-residue protein sequence, read N- to C-terminus: Elongation factor G (691 aa).

The tr-type G domain occupies Asn12 to Leu286. Residues Ala21–Thr28, Asp85–His89, and Asn139–Asp142 each bind GTP.

Belongs to the TRAFAC class translation factor GTPase superfamily. Classic translation factor GTPase family. EF-G/EF-2 subfamily.

It is found in the cytoplasm. In terms of biological role, catalyzes the GTP-dependent ribosomal translocation step during translation elongation. During this step, the ribosome changes from the pre-translocational (PRE) to the post-translocational (POST) state as the newly formed A-site-bound peptidyl-tRNA and P-site-bound deacylated tRNA move to the P and E sites, respectively. Catalyzes the coordinated movement of the two tRNA molecules, the mRNA and conformational changes in the ribosome. The polypeptide is Elongation factor G (Fervidobacterium nodosum (strain ATCC 35602 / DSM 5306 / Rt17-B1)).